A 697-amino-acid chain; its full sequence is Polyribonucleotide nucleotidyltransferase (697 aa).

Residues Asp-489 and Asp-495 each contribute to the Mg(2+) site. A KH domain is found at Pro-556–Ile-615. Positions Gly-625 to Lys-693 constitute an S1 motif domain.

It belongs to the polyribonucleotide nucleotidyltransferase family. Requires Mg(2+) as cofactor.

The protein localises to the cytoplasm. The catalysed reaction is RNA(n+1) + phosphate = RNA(n) + a ribonucleoside 5'-diphosphate. Involved in mRNA degradation. Catalyzes the phosphorolysis of single-stranded polyribonucleotides processively in the 3'- to 5'-direction. This is Polyribonucleotide nucleotidyltransferase from Bdellovibrio bacteriovorus (strain ATCC 15356 / DSM 50701 / NCIMB 9529 / HD100).